The following is a 1316-amino-acid chain: DNA-directed RNA polymerase subunit beta' (1316 aa).

Zn(2+) is bound by residues Cys-60, Cys-62, Cys-75, and Cys-78. 3 residues coordinate Mg(2+): Asp-535, Asp-537, and Asp-539. Zn(2+) is bound by residues Cys-891, Cys-968, Cys-975, and Cys-978.

It belongs to the RNA polymerase beta' chain family. In terms of assembly, the RNAP catalytic core consists of 2 alpha, 1 beta, 1 beta' and 1 omega subunit. When a sigma factor is associated with the core the holoenzyme is formed, which can initiate transcription. Requires Mg(2+) as cofactor. Zn(2+) is required as a cofactor.

It catalyses the reaction RNA(n) + a ribonucleoside 5'-triphosphate = RNA(n+1) + diphosphate. Functionally, DNA-dependent RNA polymerase catalyzes the transcription of DNA into RNA using the four ribonucleoside triphosphates as substrates. In Mycobacterium marinum (strain ATCC BAA-535 / M), this protein is DNA-directed RNA polymerase subunit beta'.